The following is a 273-amino-acid chain: Cilia- and flagella-associated protein 298-B (273 aa).

The protein belongs to the CFAP298 family.

It is found in the cytoplasm. The protein resides in the cytoskeleton. It localises to the cilium basal body. Functionally, plays a role in motile cilium function, possibly by acting on outer dynein arm assembly. Seems to be important for initiation rather than maintenance of cilium motility. Required for correct positioning of the cilium at the apical cell surface, suggesting an additional role in the planar cell polarity (PCP) pathway. May suppress canonical Wnt signaling activity. The chain is Cilia- and flagella-associated protein 298-B (cfap298-b) from Xenopus laevis (African clawed frog).